The primary structure comprises 130 residues: MSATQNYGTGRRKTATARVFLRPGTGNISINNRPLDTFFGRETARMVVRQPLELTESTEKFDIYVTVAGGGVSGQAGAIRHGITRALMEYDETLRGALRRAGYVTRDAREVERKKVGLRKARKRPQYSKR.

It belongs to the universal ribosomal protein uS9 family.

The sequence is that of Small ribosomal subunit protein uS9 from Pseudomonas putida (strain W619).